The following is a 502-amino-acid chain: Cytochrome P450 71A8 (502 aa).

A helical transmembrane segment spans residues 16 to 36; it reads IISHTLAFQALVSLILLISIT. A disordered region spans residues 93 to 119; the sequence is PVSSRRRPRGNHENSRSRLRRPRGSRS. Residue cysteine 447 participates in heme binding.

It belongs to the cytochrome P450 family. Heme serves as cofactor.

It is found in the membrane. This is Cytochrome P450 71A8 (CYP71A8) from Mentha piperita (Peppermint).